The primary structure comprises 220 residues: N-(5'-phosphoribosyl)anthranilate isomerase (220 aa).

It belongs to the TrpF family.

It carries out the reaction N-(5-phospho-beta-D-ribosyl)anthranilate = 1-(2-carboxyphenylamino)-1-deoxy-D-ribulose 5-phosphate. The protein operates within amino-acid biosynthesis; L-tryptophan biosynthesis; L-tryptophan from chorismate: step 3/5. The sequence is that of N-(5'-phosphoribosyl)anthranilate isomerase from Xylella fastidiosa (strain M12).